A 525-amino-acid chain; its full sequence is Light-independent protochlorophyllide reductase subunit B (525 aa).

Asp36 contacts [4Fe-4S] cluster. Asp290 acts as the Proton donor in catalysis. Residue 425–426 participates in substrate binding; it reads GL.

It belongs to the ChlB/BchB/BchZ family. As to quaternary structure, protochlorophyllide reductase is composed of three subunits; ChlL, ChlN and ChlB. Forms a heterotetramer of two ChlB and two ChlN subunits. Requires [4Fe-4S] cluster as cofactor.

The enzyme catalyses chlorophyllide a + oxidized 2[4Fe-4S]-[ferredoxin] + 2 ADP + 2 phosphate = protochlorophyllide a + reduced 2[4Fe-4S]-[ferredoxin] + 2 ATP + 2 H2O. Its pathway is porphyrin-containing compound metabolism; chlorophyll biosynthesis (light-independent). In terms of biological role, component of the dark-operative protochlorophyllide reductase (DPOR) that uses Mg-ATP and reduced ferredoxin to reduce ring D of protochlorophyllide (Pchlide) to form chlorophyllide a (Chlide). This reaction is light-independent. The NB-protein (ChlN-ChlB) is the catalytic component of the complex. The sequence is that of Light-independent protochlorophyllide reductase subunit B from Prochlorococcus marinus (strain MIT 9312).